The chain runs to 370 residues: MTTKEKNKSSNSPPPTSFSSLPDDIVLNCLARVSRFHYPTLSLVCKGFRSLLDSRELHATRSCIGKTESFLYVCLDLHRNCYPDCPPRWFIVSPITKQKLKPIPSVTCQSSTVVSIGSKIYIIGGFVDGHSSRRLIVLDCPSHGWRRLPEMRVPRQNAAADVINDKIYVIGGSSSNNIEDWGEVYDPKTQTWEPVLPTTLDLTVQMSVVPGSLVMSGKVYDMNGLKLNFQKNICLVEIENMMCQTKVCEGVLVWCEPEEDRGWCPVDGLEGLPNRPTSPGYLTSVAHSDRGRRVTVWWESAVLHRLGPKWTKECKTEIWCAEISFERRGVGKVCGFVEWSKNVFTKDDYKTYKLPASLSDFFLNSTIVTY.

The region spanning Pro15–Arg61 is the F-box domain. 2 Kelch repeats span residues Lys119–Asp165 and Ile167–Ser212.

In Arabidopsis thaliana (Mouse-ear cress), this protein is Putative F-box/kelch-repeat protein At3g46050.